The following is a 298-amino-acid chain: 4-nitrophenylphosphatase (298 aa).

Homodimer. In terms of processing, the N-terminus is blocked.

The enzyme catalyses 4-nitrophenyl phosphate + H2O = 4-nitrophenol + phosphate + H(+). With respect to regulation, activity enhanced by Mg(2+) ion but inhibited by Zn(2+) ion. The polypeptide is 4-nitrophenylphosphatase (pho2) (Schizosaccharomyces pombe (strain 972 / ATCC 24843) (Fission yeast)).